A 272-amino-acid chain; its full sequence is MKEKIININSDLIKELRKRTSIGVVECKQALIKANGDLELAIDNMRRSGLKTACKKSGHITSSGLIAVEITSNKQYGIMIEINCETDFVAKDSTFQEFAKTVIITALNEKIHDINILQTRFKEQRTNLIAQVGENINIRRFVVLTGDFLGCYVHGFKIGVIVAASGNVTADLMKHISMHIAAKNPKYINVNDVPRNVIIRENNIQMDIAMKSGKSYKISEKITAGRMSKFFNDIVLTKQNFIMDINKTVEELLIEYHIKINNFARFELGEDM.

Residues 86–89 (TDFV) form an involved in Mg(2+) ion dislocation from EF-Tu region.

It belongs to the EF-Ts family.

It localises to the cytoplasm. Associates with the EF-Tu.GDP complex and induces the exchange of GDP to GTP. It remains bound to the aminoacyl-tRNA.EF-Tu.GTP complex up to the GTP hydrolysis stage on the ribosome. In Blochmanniella pennsylvanica (strain BPEN), this protein is Elongation factor Ts.